A 609-amino-acid chain; its full sequence is Pogo transposable element with KRAB domain (609 aa).

2 disordered regions span residues 1-28 (MEST…ELED) and 100-127 (EGEE…SDVK). Residues 8-28 (LNLSLKEEEEEEEIQSRELED) adopt a coiled-coil conformation. A Glycyl lysine isopeptide (Lys-Gly) (interchain with G-Cter in SUMO2) cross-link involves residue Lys-13. Residues 47–118 (ALFDEVAIYF…DEWQLQGGTS (72 aa)) form the KRAB domain. Positions 108–119 (SDEWQLQGGTSA) are enriched in polar residues. The HTH CENPB-type domain maps to 250 to 323 (AFRGPKNGRF…MRRYDLSLRH (74 aa)). Positions 353-567 (HDYEVAQMGN…ISSESIVQGF (215 aa)) constitute a DDE-1 domain. Lys-384 participates in a covalent cross-link: Glycyl lysine isopeptide (Lys-Gly) (interchain with G-Cter in SUMO2). A disordered region spans residues 588–609 (SELPGGGEPPKDCDTESMAESN).

The protein resides in the nucleus. In Homo sapiens (Human), this protein is Pogo transposable element with KRAB domain (POGK).